The sequence spans 1233 residues: Structural maintenance of chromosomes protein 1A (1233 aa).

ATP is bound at residue 32 to 39; it reads GPNGSGKS. Coiled coils occupy residues 104-124 and 163-503; these read EYKINNKVVQLHEYSEELEKL and ELAQ…KAEI. The span at 284–293 shows a compositional bias: basic and acidic residues; it reads IKEKDSELNQ. Disordered regions lie at residues 284–307 and 350–369; these read IKEKDSELNQKRPQYIKAKENTSH and FEERMEEESQSQGRDLTLEE. A phosphoserine mark is found at Ser358 and Ser360. The SMC hinge domain maps to 515–629; it reads VYGRLIDLCQ…DNVEDARRIA (115 aa). N6-acetyllysine is present on residues Lys648 and Lys713. Residues 660 to 935 are a coiled coil; the sequence is KAKARRWDEK…RHNLLQACKM (276 aa). Positions 946 to 969 are disordered; that stretch reads TMDDISQEEGGSQGEESVSGSQRT. Over residues 953-967 the composition is skewed to low complexity; that stretch reads EEGGSQGEESVSGSQ. 4 positions are modified to phosphoserine: Ser957, Ser962, Ser966, and Ser970. Residues 991–1068 are a coiled coil; it reads KDAQAEEEIK…FEQIKKERFD (78 aa). Lys1037 carries the post-translational modification N6-acetyllysine.

It belongs to the SMC family. SMC1 subfamily. Forms a heterodimer with SMC3 in cohesin complexes. Cohesin complexes are composed of the SMC1 (SMC1A or meiosis-specific SMC1B) and SMC3 heterodimer attached via their SMC hinge domain, RAD21 which link them, and one STAG protein (STAG1, STAG2 or meiosis-specific STAG3), which interacts with RAD21. In germ cell cohesin complexes, SMC1A is mutually exclusive with SMC1B. Found in a complex with CDCA5, SMC3 and RAD21, PDS5A/SCC-112 and PDS5B/APRIN. Interacts with STAG3, NDC80, BRAC1, BRAT1 and RPGR. Found in a complex containing POLE and SMC3. The cohesin complex interacts with the cohesin loading complex subunits NIPBL/Scc2 (via HEAT repeats) and MAU2/Scc4. NIPBL directly contacts all members of the complex, RAD21, SMC1A/B, SMC3 and STAG1. Interacts with SYCP2. In terms of processing, phosphorylated upon ionizing radiation or DNA methylation. Phosphorylation of Ser-957 and Ser-966 activates it and is required for S-phase checkpoint activation. Ubiquitinated by the DCX(DCAF15) complex, leading to its degradation.

The protein localises to the nucleus. Its subcellular location is the chromosome. Functionally, involved in chromosome cohesion during cell cycle and in DNA repair. Central component of cohesin complex. The cohesin complex is required for the cohesion of sister chromatids after DNA replication. The cohesin complex apparently forms a large proteinaceous ring within which sister chromatids can be trapped. At anaphase, the complex is cleaved and dissociates from chromatin, allowing sister chromatids to segregate. The cohesin complex may also play a role in spindle pole assembly during mitosis. Involved in DNA repair via its interaction with BRCA1 and its related phosphorylation by ATM, or via its phosphorylation by ATR. Works as a downstream effector both in the ATM/NBS1 branch and in the ATR/MSH2 branch of S-phase checkpoint. The polypeptide is Structural maintenance of chromosomes protein 1A (Smc1a) (Rattus norvegicus (Rat)).